Consider the following 211-residue polypeptide: Pyridoxine/pyridoxamine 5'-phosphate oxidase (211 aa).

Substrate is bound by residues 7 to 10 (RRDY) and Lys-65. Residues 60–65 (RIVLLK), 75–76 (YT), Arg-81, Lys-82, and Gln-104 each bind FMN. 3 residues coordinate substrate: Tyr-122, Arg-126, and Ser-130. FMN contacts are provided by residues 139–140 (QS) and Trp-184. 190–192 (RLH) lines the substrate pocket. Arg-194 serves as a coordination point for FMN.

The protein belongs to the pyridoxamine 5'-phosphate oxidase family. Homodimer. FMN is required as a cofactor.

The enzyme catalyses pyridoxamine 5'-phosphate + O2 + H2O = pyridoxal 5'-phosphate + H2O2 + NH4(+). It catalyses the reaction pyridoxine 5'-phosphate + O2 = pyridoxal 5'-phosphate + H2O2. It functions in the pathway cofactor metabolism; pyridoxal 5'-phosphate salvage; pyridoxal 5'-phosphate from pyridoxamine 5'-phosphate: step 1/1. Its pathway is cofactor metabolism; pyridoxal 5'-phosphate salvage; pyridoxal 5'-phosphate from pyridoxine 5'-phosphate: step 1/1. Its function is as follows. Catalyzes the oxidation of either pyridoxine 5'-phosphate (PNP) or pyridoxamine 5'-phosphate (PMP) into pyridoxal 5'-phosphate (PLP). This chain is Pyridoxine/pyridoxamine 5'-phosphate oxidase, found in Aliivibrio salmonicida (strain LFI1238) (Vibrio salmonicida (strain LFI1238)).